The following is a 334-amino-acid chain: Heat-inducible transcription repressor HrcA (334 aa).

This sequence belongs to the HrcA family.

Functionally, negative regulator of class I heat shock genes (grpE-dnaK-dnaJ and groELS operons). Prevents heat-shock induction of these operons. In Albidiferax ferrireducens (strain ATCC BAA-621 / DSM 15236 / T118) (Rhodoferax ferrireducens), this protein is Heat-inducible transcription repressor HrcA.